A 673-amino-acid polypeptide reads, in one-letter code: UvrABC system protein B (673 aa).

Residues 26–183 (EGLEDGLAHQ…RRLAELQYTR (158 aa)) form the Helicase ATP-binding domain. ATP is bound at residue 39-46 (GVTGSGKT). Positions 92-115 (YYDYYQPEAYVPSSDTFIEKDASV) match the Beta-hairpin motif. A Helicase C-terminal domain is found at 431 to 597 (QVDDLLSEIR…GLNKKVVDIL (167 aa)). The 36-residue stretch at 633-668 (QQKIHELEGQMMQHAQNLEFEEAAQIRDQLHQLREL) folds into the UVR domain.

It belongs to the UvrB family. Forms a heterotetramer with UvrA during the search for lesions. Interacts with UvrC in an incision complex.

It is found in the cytoplasm. Functionally, the UvrABC repair system catalyzes the recognition and processing of DNA lesions. A damage recognition complex composed of 2 UvrA and 2 UvrB subunits scans DNA for abnormalities. Upon binding of the UvrA(2)B(2) complex to a putative damaged site, the DNA wraps around one UvrB monomer. DNA wrap is dependent on ATP binding by UvrB and probably causes local melting of the DNA helix, facilitating insertion of UvrB beta-hairpin between the DNA strands. Then UvrB probes one DNA strand for the presence of a lesion. If a lesion is found the UvrA subunits dissociate and the UvrB-DNA preincision complex is formed. This complex is subsequently bound by UvrC and the second UvrB is released. If no lesion is found, the DNA wraps around the other UvrB subunit that will check the other stand for damage. This Klebsiella pneumoniae (strain 342) protein is UvrABC system protein B.